A 180-amino-acid polypeptide reads, in one-letter code: Translation initiation factor IF-3 (180 aa).

The protein belongs to the IF-3 family. Monomer.

Its subcellular location is the cytoplasm. Its function is as follows. IF-3 binds to the 30S ribosomal subunit and shifts the equilibrium between 70S ribosomes and their 50S and 30S subunits in favor of the free subunits, thus enhancing the availability of 30S subunits on which protein synthesis initiation begins. The protein is Translation initiation factor IF-3 of Shewanella baltica (strain OS223).